The sequence spans 171 residues: Large ribosomal subunit protein bL9 (171 aa).

It belongs to the bacterial ribosomal protein bL9 family.

In terms of biological role, binds to the 23S rRNA. The sequence is that of Large ribosomal subunit protein bL9 from Orientia tsutsugamushi (strain Ikeda) (Rickettsia tsutsugamushi).